The primary structure comprises 117 residues: Large ribosomal subunit protein uL18 (117 aa).

Belongs to the universal ribosomal protein uL18 family. In terms of assembly, part of the 50S ribosomal subunit; part of the 5S rRNA/L5/L18/L25 subcomplex. Contacts the 5S and 23S rRNAs.

Functionally, this is one of the proteins that bind and probably mediate the attachment of the 5S RNA into the large ribosomal subunit, where it forms part of the central protuberance. The sequence is that of Large ribosomal subunit protein uL18 from Phytoplasma australiense.